The sequence spans 311 residues: Metal-staphylopine import system permease protein CntB (311 aa).

Transmembrane regions (helical) follow at residues Ile9–Ile29, Leu105–Ala125, Val139–Val159, Gly173–Phe193, Ile237–Ala257, and Phe274–Leu294. The ABC transmembrane type-1 domain maps to Phe99–Ala295.

The protein belongs to the binding-protein-dependent transport system permease family. The complex is composed of two ATP-binding proteins (CntD and CntF), two transmembrane proteins (CntB and CntC) and a solute-binding protein (CntA).

It is found in the cell membrane. With respect to regulation, nickel/cobalt import is reduced in the presence of zinc. Functionally, part of the ABC transporter complex CntABCDF (Opp1) involved in the uptake of metal in complex with the metallophore staphylopine (StP). Involved in the import of divalent metals ions such as nickel, cobalt and zinc. Probably responsible for the translocation of the substrate across the membrane. Plays a major role in nickel/cobalt import in zinc-depleted conditions. Contributes to virulence. Required for full urease activity in vitro. The protein is Metal-staphylopine import system permease protein CntB of Staphylococcus aureus (strain NCTC 8325 / PS 47).